Reading from the N-terminus, the 897-residue chain is MASAVPAQVQSSQASAPQLQRGIVKMVLSGCAIIVRGQPRGGPPPERQINLSNIRAGALARRAIQGQPDTKDTPDEPWAFQAREFMRKKVIGKEVCFTVENKTPQGREYGMVYLGKDTSGENIAESLVAEGLAMVRREGIRGNNPEQVRLCDLEDQAKSSKKGLWSEGGGSHTIRDLKYTIENPRNFVDSLHQKPVNAIIEHVRDGCMVRALLLPDYYLVTVMLSGIKSPTFKREADGSETPEPFAAEAKFFTESRLLQRDVQIILESCPNQVILGTILHPNGNITELLLKEGFARCVDWSMAVYTQGAEKLRAAERSAKERKVRIWKDYVAPTANLDQKDRQFVAKVMQVVNADAIVVKLNSGEYKTIHLSSIRPPRLEGEEKNKDKDKRFRPLYDIPYMFEAREFLRKKLIGKKVNVTVDYIRAATNAMEMGVPAFPERTCATVTIGGINIAEALVSKGLATVIRYRQDDDQRSSHYDELLAAEARAIKNGKGLHSKKEVPIHRVADISGETQKAKQFFPFLQRAGRSEAVVEYVFSGSRLKLYMPKETCLITFLLAGIECPRGSRNMPGGMQVAEPYSEEAMLFTKELVLQREVEVEVESMDIAGNFIDWLHIDGVNLSVALVENALSKVHFTAERSSYYKTLVSAEESARQRKEKLWANYEEKPNEEVAQVTEAKERGRNTDPSTSLEITDGLHFYAQDVETGTKLENLMESMRGEIAAQPPVEGSFAPRRGEFCIAKFADGEWYRARVEKVESPAKVHVFYIDYGNREVLSSTRLAALPPAFSTRTLPPQATEYAFAYIQVPQDEDARADAVDSVVRDIHNTQCLLNVEYSGMVCPQVTLQFADTKEDVGLGLVKEGMVMVDIRKEKYLQKMVTEYLNAQESAKSARLNIWR.

4 TNase-like domains span residues 18–167, 194–329, 342–499, and 528–663; these read QLQR…LWSE, KPVN…IWKD, RQFV…LHSK, and GRSE…LWAN. A Tudor domain is found at 732-790; the sequence is APRRGEFCIAKFADGEWYRARVEKVESPAKVHVFYIDYGNREVLSSTRLAALPPAFSTR.

It localises to the cytoplasm. The sequence is that of Staphylococcal nuclease domain-containing protein 1 (snd1) from Danio rerio (Zebrafish).